We begin with the raw amino-acid sequence, 1117 residues long: Centrosomal protein of 126 kDa (1117 aa).

Residues 1-42 (MLAGRPGTRSAVGELGTESSDNLDRAPLGPRESGGHHRPGSY) form a disordered region. Residues 49 to 121 (LEKNLEEERQ…EEVTEKFQRA (73 aa)) are a coiled coil. Disordered stretches follow at residues 643 to 664 (AENS…QQFH) and 730 to 759 (KKEE…IIRK). The span at 730–744 (KKEESKIPVHDDSKT) shows a compositional bias: basic and acidic residues. A compositionally biased stretch (basic residues) spans 745 to 758 (KQGKPQRGRAKIIR).

As to quaternary structure, interacts with DCTN1. As to expression, expressed in brain, lung, skeletal muscle, kidney, pancreas, testis and ovary.

The protein resides in the midbody. It is found in the cytoplasm. It localises to the cytoskeleton. The protein localises to the microtubule organizing center. Its subcellular location is the centrosome. The protein resides in the cilium basal body. In terms of biological role, participates in cytokinesis. Necessary for microtubules and mitotic spindle organization. Involved in primary cilium formation. The protein is Centrosomal protein of 126 kDa of Homo sapiens (Human).